The primary structure comprises 473 residues: Photosystem II CP43 reaction center protein (473 aa).

Residues 1 to 14 (MKTLYSLRRFYPVE) constitute a propeptide that is removed on maturation. Residue Thr-15 is modified to N-acetylthreonine. Phosphothreonine is present on Thr-15. A run of 5 helical transmembrane segments spans residues 69–93 (LFEVAHFVPEKPMYEQGLILLPHLA), 134–155 (LIGPETLEESFPFFGYVWKDKN), 178–200 (KALYFGGVYDTWAPGGGDVRKIT), 255–275 (KPFAWARRAFIWSGEAYLSYS), and 291–312 (WFNNTAYPSEFYGPTGPEASQA). A [CaMn4O5] cluster-binding site is contributed by Glu-367. Residues 447–471 (RARAAAAGFEKGIDRDTEPVLSMTP) traverse the membrane as a helical segment.

It belongs to the PsbB/PsbC family. PsbC subfamily. As to quaternary structure, PSII is composed of 1 copy each of membrane proteins PsbA, PsbB, PsbC, PsbD, PsbE, PsbF, PsbH, PsbI, PsbJ, PsbK, PsbL, PsbM, PsbT, PsbX, PsbY, PsbZ, Psb30/Ycf12, at least 3 peripheral proteins of the oxygen-evolving complex and a large number of cofactors. It forms dimeric complexes. Binds multiple chlorophylls and provides some of the ligands for the Ca-4Mn-5O cluster of the oxygen-evolving complex. It may also provide a ligand for a Cl- that is required for oxygen evolution. PSII binds additional chlorophylls, carotenoids and specific lipids. is required as a cofactor.

It localises to the plastid. The protein localises to the chloroplast thylakoid membrane. Functionally, one of the components of the core complex of photosystem II (PSII). It binds chlorophyll and helps catalyze the primary light-induced photochemical processes of PSII. PSII is a light-driven water:plastoquinone oxidoreductase, using light energy to abstract electrons from H(2)O, generating O(2) and a proton gradient subsequently used for ATP formation. The protein is Photosystem II CP43 reaction center protein of Angiopteris evecta (Mule's foot fern).